The chain runs to 170 residues: MDLKQFIRDIPDFPQKGIIFRDITPLLKDSRAFREAIDRMCDLVSDRDFDLVVAPEARGFILGAAMAYKLGKGFVPVRKPGKLPYRTVYEEYQLEYGTEQLHIHEDAIERGQKVLIVDDVLATGGTAEALIRLVKKLGGEVSALAFLVELSYLNPRKRLEGYDIKTLIVY.

The protein belongs to the purine/pyrimidine phosphoribosyltransferase family. Homodimer.

The protein resides in the cytoplasm. The enzyme catalyses AMP + diphosphate = 5-phospho-alpha-D-ribose 1-diphosphate + adenine. Its pathway is purine metabolism; AMP biosynthesis via salvage pathway; AMP from adenine: step 1/1. Its function is as follows. Catalyzes a salvage reaction resulting in the formation of AMP, that is energically less costly than de novo synthesis. The protein is Adenine phosphoribosyltransferase of Thermotoga neapolitana (strain ATCC 49049 / DSM 4359 / NBRC 107923 / NS-E).